The chain runs to 163 residues: Nucleotide-binding protein ESA_02876 (163 aa).

This sequence belongs to the YajQ family.

In terms of biological role, nucleotide-binding protein. The sequence is that of Nucleotide-binding protein ESA_02876 from Cronobacter sakazakii (strain ATCC BAA-894) (Enterobacter sakazakii).